The following is a 295-amino-acid chain: Indole-3-glycerol phosphate synthase (295 aa).

This sequence belongs to the TrpC family.

The catalysed reaction is 1-(2-carboxyphenylamino)-1-deoxy-D-ribulose 5-phosphate + H(+) = (1S,2R)-1-C-(indol-3-yl)glycerol 3-phosphate + CO2 + H2O. The protein operates within amino-acid biosynthesis; L-tryptophan biosynthesis; L-tryptophan from chorismate: step 4/5. The chain is Indole-3-glycerol phosphate synthase from Prochlorococcus marinus (strain AS9601).